We begin with the raw amino-acid sequence, 336 residues long: Phospho-N-acetylmuramoyl-pentapeptide-transferase (336 aa).

10 helical membrane passes run L3–I23, M52–L72, N79–L99, L123–N143, I144–V164, G175–A195, F201–N221, V227–A247, L255–F275, and V315–Y335.

The protein belongs to the glycosyltransferase 4 family. MraY subfamily. The cofactor is Mg(2+).

Its subcellular location is the cell membrane. It carries out the reaction UDP-N-acetyl-alpha-D-muramoyl-L-alanyl-gamma-D-glutamyl-L-lysyl-D-alanyl-D-alanine + di-trans,octa-cis-undecaprenyl phosphate = Mur2Ac(oyl-L-Ala-gamma-D-Glu-L-Lys-D-Ala-D-Ala)-di-trans,octa-cis-undecaprenyl diphosphate + UMP. It participates in cell wall biogenesis; peptidoglycan biosynthesis. In terms of biological role, catalyzes the initial step of the lipid cycle reactions in the biosynthesis of the cell wall peptidoglycan: transfers peptidoglycan precursor phospho-MurNAc-pentapeptide from UDP-MurNAc-pentapeptide onto the lipid carrier undecaprenyl phosphate, yielding undecaprenyl-pyrophosphoryl-MurNAc-pentapeptide, known as lipid I. This Streptococcus agalactiae serotype Ia (strain ATCC 27591 / A909 / CDC SS700) protein is Phospho-N-acetylmuramoyl-pentapeptide-transferase.